A 1494-amino-acid polypeptide reads, in one-letter code: B-cell CLL/lymphoma 9-like protein (1494 aa).

Disordered stretches follow at residues methionine 1–glutamine 236 and valine 269–glutamine 496. Over residues glycine 20–proline 37 the composition is skewed to pro residues. Serine 21 and serine 25 each carry phosphoserine. Lysine 36 carries the N6-acetyllysine modification. 2 stretches are compositionally biased toward polar residues: residues threonine 45–leucine 70 and asparagine 85–asparagine 96. The residue at position 88 (serine 88) is a Phosphoserine. An N6-acetyllysine mark is found at lysine 108 and lysine 110. 2 stretches are compositionally biased toward basic and acidic residues: residues glutamate 114–glutamate 126 and serine 134–glutamine 153. Residues serine 116 and serine 118 each carry the phosphoserine modification. The residue at position 137 (lysine 137) is an N6-acetyllysine. Residues proline 193 to proline 207 show a composition bias toward polar residues. Pro residues-rich tracts occupy residues lysine 279–leucine 289 and serine 299–glycine 322. The interval proline 302–arginine 530 is necessary for interaction with CTNNB1. Residues threonine 348–asparagine 360 are compositionally biased toward low complexity. Positions leucine 396–leucine 418 are enriched in basic and acidic residues. At serine 421 the chain carries Phosphoserine. Threonine 511 is subject to Phosphothreonine. Arginine 677 is modified (asymmetric dimethylarginine). A phosphoserine mark is found at serine 747, serine 810, serine 912, serine 923, serine 935, serine 939, serine 944, serine 972, serine 984, serine 988, serine 994, serine 1001, serine 1007, and serine 1014. Disordered stretches follow at residues arginine 905–serine 1082 and glutamate 1113–proline 1206. Positions proline 932–glutamine 957 are enriched in polar residues. A compositionally biased stretch (polar residues) spans glutamine 974–lysine 993. Residues glycine 1016–asparagine 1035 show a composition bias toward polar residues. Residues proline 1046–serine 1059 are compositionally biased toward low complexity. Residues glycine 1060–serine 1082 are compositionally biased toward polar residues. Positions proline 1119 to glycine 1129 are enriched in pro residues. Positions glycine 1133 to histidine 1143 are enriched in polar residues. The span at histidine 1165 to threonine 1176 shows a compositional bias: pro residues. Residue lysine 1339 forms a Glycyl lysine isopeptide (Lys-Gly) (interchain with G-Cter in SUMO2) linkage.

The protein belongs to the BCL9 family. Found in a complex with CDC73; CTNNB1 and PYGO1. Interacts with CTNNB1. Expressed in kidney, liver, lung, testis, brain, spleen, heart and skeletal muscle. Highly expressed in numerous colorectal tumors compared to corresponding non-cancerous tissues.

The protein resides in the nucleus. Its function is as follows. Transcriptional regulator that acts as an activator. Promotes beta-catenin transcriptional activity. Plays a role in tumorigenesis. Enhances the neoplastic transforming activity of CTNNB1. The protein is B-cell CLL/lymphoma 9-like protein (Bcl9l) of Mus musculus (Mouse).